A 240-amino-acid chain; its full sequence is Ribonuclease HII (240 aa).

One can recognise an RNase H type-2 domain in the interval glycine 33–threonine 222. A divalent metal cation-binding residues include aspartate 39, glutamate 40, and aspartate 131.

It belongs to the RNase HII family. Requires Mn(2+) as cofactor. Mg(2+) serves as cofactor.

The protein localises to the cytoplasm. It catalyses the reaction Endonucleolytic cleavage to 5'-phosphomonoester.. Functionally, endonuclease that specifically degrades the RNA of RNA-DNA hybrids. The sequence is that of Ribonuclease HII from Mycobacterium leprae (strain Br4923).